A 218-amino-acid chain; its full sequence is Serine/threonine-protein phosphatase 1 (218 aa).

Mn(2+) contacts are provided by Asp24, His26, Asp53, and Asn79. Residue His80 is the Proton donor of the active site. His187 provides a ligand contact to Mn(2+).

Belongs to the PPP phosphatase family. PP-1 subfamily. Mn(2+) is required as a cofactor.

The catalysed reaction is O-phospho-L-seryl-[protein] + H2O = L-seryl-[protein] + phosphate. The enzyme catalyses O-phospho-L-threonyl-[protein] + H2O = L-threonyl-[protein] + phosphate. In terms of biological role, plays a key role in signaling protein misfolding via the CpxR/CPXA transducing system. It also modulates the phosphorylated status of many phosphoproteins in E.coli, some of which acting as major chaperones. Has been shown, in vitro, to act on Ser, Thr and Tyr-phosphorylated substrates. This is Serine/threonine-protein phosphatase 1 (pphA) from Escherichia coli (strain K12).